The primary structure comprises 701 residues: Cytosolic endo-beta-N-acetylglucosaminidase 2 (701 aa).

Belongs to the glycosyl hydrolase 85 family.

Its subcellular location is the cytoplasm. The protein localises to the cytosol. The catalysed reaction is an N(4)-(oligosaccharide-(1-&gt;3)-[oligosaccharide-(1-&gt;6)]-beta-D-Man-(1-&gt;4)-beta-D-GlcNAc-(1-&gt;4)-alpha-D-GlcNAc)-L-asparaginyl-[protein] + H2O = an oligosaccharide-(1-&gt;3)-[oligosaccharide-(1-&gt;6)]-beta-D-Man-(1-&gt;4)-D-GlcNAc + N(4)-(N-acetyl-beta-D-glucosaminyl)-L-asparaginyl-[protein]. Its function is as follows. Endoglycosidase that releases N-glycans from glycoproteins by cleaving the beta-1,4-glycosidic bond in the N,N'-diacetylchitobiose core. Involved in the production of high-mannose type N-glycans during plant development and fruit maturation. This Arabidopsis thaliana (Mouse-ear cress) protein is Cytosolic endo-beta-N-acetylglucosaminidase 2.